The chain runs to 548 residues: ADP,ATP carrier protein 1 (548 aa).

The next 2 helical transmembrane spans lie at 39–59 (RPVF…YSVS) and 75–95 (SIPY…VFSI). Asn101 is a glycosylation site (N-linked (GlcNAc...) asparagine). The next 8 membrane-spanning stretches (helical) occupy residues 107-127 (VFSI…TVLM), 149-169 (MVFM…SWTS), 171-191 (LMYL…FFAL), 204-224 (FIPL…FSMK), 239-259 (LFFR…IYLI), 302-322 (LVLA…MVEA), 350-370 (IQLA…PALI), and 374-394 (GFLY…ASVF). N-linked (GlcNAc...) asparagine glycosylation is found at Asn400 and Asn406. A helical transmembrane segment spans residues 410–430 (LGFVSIGENLWLEQLLGAIIV). Asn488 carries an N-linked (GlcNAc...) asparagine glycan. The chain crosses the membrane as a helical span at residues 494–514 (KAAISSLTIVTVITACWGFAV).

The protein belongs to the ADP/ATP translocase tlc family.

The protein localises to the cell membrane. ATP transporter involved in the uptake of ATP from the host cell cytoplasm. Provides the microsporidian cell with host ATP in exchange for ADP. This is an obligate exchange system. This energy acquiring activity is an important component of microsporidian parasitism. This Paranosema grylli (Microsporidian parasite) protein is ADP,ATP carrier protein 1 (ANC1).